The primary structure comprises 214 residues: Adenylate kinase (214 aa).

10–15 (GAGKGT) serves as a coordination point for ATP. Residues 30 to 59 (STGDMLRAAVKAGTPLGLEAKKVMDAGQLV) are NMP. AMP contacts are provided by residues threonine 31, arginine 36, 57-59 (QLV), 85-88 (GFPR), and glutamine 92. Residues 122 to 159 (GRRVHPGSGRVYHVVFNPPKVEGKDDVTGEDLAIRPDD) are LID. ATP-binding positions include arginine 123 and 132 to 133 (VY). AMP is bound by residues arginine 156 and arginine 167. Glutamine 200 provides a ligand contact to ATP.

The protein belongs to the adenylate kinase family. As to quaternary structure, monomer.

The protein localises to the cytoplasm. It catalyses the reaction AMP + ATP = 2 ADP. Its pathway is purine metabolism; AMP biosynthesis via salvage pathway; AMP from ADP: step 1/1. In terms of biological role, catalyzes the reversible transfer of the terminal phosphate group between ATP and AMP. Plays an important role in cellular energy homeostasis and in adenine nucleotide metabolism. The chain is Adenylate kinase from Shewanella putrefaciens (strain CN-32 / ATCC BAA-453).